The following is a 1069-amino-acid chain: Degenerin-like protein del-10 (1069 aa).

Topologically, residues 1-95 (MVRMAERLAE…LNAASPVTRG (95 aa)) are cytoplasmic. Residues 96-116 (LWCMIIIAFVILVLVQCYSQI) traverse the membrane as a helical segment. The Extracellular portion of the chain corresponds to 117–830 (KLYISEPVAT…FWSLACDIGG (714 aa)). Residues asparagine 216, asparagine 290, asparagine 374, asparagine 454, asparagine 539, asparagine 545, and asparagine 584 are each glycosylated (N-linked (GlcNAc...) asparagine). The helical transmembrane segment at 831 to 851 (ALGLFLGASLLTIIEIVYLCI) threads the bilayer. Topologically, residues 852 to 1069 (QYGLCGKRAR…EEDDDKHSYV (218 aa)) are cytoplasmic. Disordered stretches follow at residues 898-948 (KKSQ…TLTP) and 960-1069 (RNSQ…HSYV). The segment covering 915–928 (GDKFRSRASSEESK) has biased composition (basic and acidic residues). The span at 938–948 (NDPSGNSTLTP) shows a compositional bias: polar residues. Residues 967-978 (YHDDHHPEDHYY) show a composition bias toward basic and acidic residues.

It belongs to the amiloride-sensitive sodium channel (TC 1.A.6) family.

The protein resides in the membrane. In Caenorhabditis elegans, this protein is Degenerin-like protein del-10.